An 886-amino-acid polypeptide reads, in one-letter code: Protein O-mannosyltransferase 1 (886 aa).

2 stretches are compositionally biased toward polar residues: residues 1 to 10 (MSATYTNTIT) and 18 to 34 (VRQQQQHQWTGSDLSGE). Disordered regions lie at residues 1-37 (MSATYTNTITQRRKTAKVRQQQQHQWTGSDLSGESNE) and 88-161 (RGSV…KTAN). Residues 105 to 139 (PTPVATPKQASPSPTSDRSRSLSRSPSPSRSRSLS) are compositionally biased toward low complexity. N-linked (GlcNAc...) asparagine glycans are attached at residues N161 and N242. A run of 4 helical transmembrane segments spans residues 256–276 (MPIFWFRFLPAMCGSLLAPAV), 310–330 (VLMESMLLLATTVGIACLLRF), 349–369 (VCLGAAGTVKYVGFLALGLAF), and 398–418 (LLIFVGIPLAVYLGVFYIHFK). MIR domains lie at 450–511 (PLAV…VKRP), 522–579 (PDII…VEIL), and 585–642 (GDIW…VEEH). Transmembrane regions (helical) follow at residues 727–747 (ILLWYTATMGILVYAGLLAFY), 791–811 (LFLHNYLPAFVFKLLLLCFVV), and 835–855 (LMLILWLVGVLSIFSKFIPFS).

This sequence belongs to the glycosyltransferase 39 family. As to quaternary structure, interacts with tw/POMT2. As to expression, at the cellular blastoderm stage, expression accumulates in the ventrally located mesoderm primordium. At germ band extension, mesoderm expression is seen as stripes of strong expression. A very strong signal is also detected in the invaginating gut. As the germ band retracts, mesodermal expression decays and becomes restricted to somatic muscle precursors. After dorsal closure, expression has disappeared from the mesoderm and remains in the endoderm. Some expression is detected in a few cells of the head and the pharyngeal muscles.

It is found in the endoplasmic reticulum membrane. It catalyses the reaction a di-trans,poly-cis-dolichyl beta-D-mannosyl phosphate + L-seryl-[protein] = 3-O-(alpha-D-mannosyl)-L-seryl-[protein] + a di-trans,poly-cis-dolichyl phosphate + H(+). The enzyme catalyses a di-trans,poly-cis-dolichyl beta-D-mannosyl phosphate + L-threonyl-[protein] = 3-O-(alpha-D-mannosyl)-L-threonyl-[protein] + a di-trans,poly-cis-dolichyl phosphate + H(+). Its pathway is protein modification; protein glycosylation. Functionally, rt/POMT1 and tw/POMT2 function as a protein O-mannosyltransferase in association with each other to generate and maintain normal muscle development. This Drosophila melanogaster (Fruit fly) protein is Protein O-mannosyltransferase 1.